Reading from the N-terminus, the 501-residue chain is Probable cytochrome P450 6a20 (501 aa).

Residue cysteine 445 coordinates heme.

The protein belongs to the cytochrome P450 family. Heme serves as cofactor.

The protein resides in the endoplasmic reticulum membrane. It localises to the microsome membrane. May be involved in the metabolism of insect hormones and in the breakdown of synthetic insecticides. The protein is Probable cytochrome P450 6a20 (Cyp6a20) of Drosophila melanogaster (Fruit fly).